Reading from the N-terminus, the 1339-residue chain is Receptor tyrosine-protein kinase erbB-3 (1339 aa).

The first 19 residues, 1-19 (MRATGTLQVLCFLLSLARG), serve as a signal peptide directing secretion. The Extracellular portion of the chain corresponds to 20–643 (SEMGNSQAVC…EVLMSKPHLV (624 aa)). N-linked (GlcNAc...) asparagine glycosylation is present at Asn126. 11 disulfides stabilise this stretch: Cys186-Cys194, Cys190-Cys202, Cys210-Cys218, Cys214-Cys226, Cys227-Cys235, Cys231-Cys243, Cys246-Cys255, Cys259-Cys286, Cys290-Cys301, Cys305-Cys320, and Cys323-Cys327. A glycan (N-linked (GlcNAc...) asparagine) is linked at Asn250. N-linked (GlcNAc...) asparagine glycosylation is found at Asn353, Asn408, Asn414, Asn437, and Asn469. Intrachain disulfides connect Cys500–Cys509, Cys504–Cys517, Cys520–Cys529, Cys533–Cys549, Cys552–Cys565, Cys556–Cys573, Cys576–Cys585, Cys589–Cys610, Cys613–Cys621, and Cys617–Cys629. An N-linked (GlcNAc...) asparagine glycan is attached at Asn522. Residue Asn566 is glycosylated (N-linked (GlcNAc...) asparagine). Asn616 is a glycosylation site (N-linked (GlcNAc...) asparagine). A helical membrane pass occupies residues 644-662 (IAVTVGLAVILMILGGSFL). Residues 663-1339 (YWRGRRIQNK…LFPKANAQRT (677 aa)) are Cytoplasmic-facing. The residue at position 684 (Ser684) is a Phosphoserine. The 258-residue stretch at 707 to 964 (LRKLKVLGSG…TFKELANEFT (258 aa)) folds into the Protein kinase domain. Residues 713–721 (LGSGVFGTV), Lys740, 786–788 (QYL), and 832–837 (DLALRN) each bind ATP. The active-site Proton acceptor is Asp832. The residue at position 980 (Ser980) is a Phosphoserine. A compositionally biased stretch (low complexity) spans 1023–1036 (SLGSALSLPTGTLT). 2 disordered regions span residues 1023–1052 (SLGSALSLPTGTLTRPRGSQSLLSPSSGYM) and 1078–1215 (PISL…GSLE). The span at 1039-1052 (RGSQSLLSPSSGYM) shows a compositional bias: polar residues. Low complexity predominate over residues 1172–1184 (GTLSSVGLSSVLG). Acidic residues predominate over residues 1185-1195 (TEEEDEDEEYE).

Belongs to the protein kinase superfamily. Tyr protein kinase family. EGF receptor subfamily. Monomer and homodimer. Heterodimer with each of the other ERBB receptors (Potential). Interacts with CSPG5, PA2G4, GRB7, MYOC and MUC1. Found in a ternary complex with NRG1 and ITGAV:ITGB3 or ITGA6:ITGB4. In terms of processing, autophosphorylated. Ligand-binding increases phosphorylation on tyrosine residues and promotes its association with the p85 subunit of phosphatidylinositol 3-kinase.

The protein resides in the membrane. The enzyme catalyses L-tyrosyl-[protein] + ATP = O-phospho-L-tyrosyl-[protein] + ADP + H(+). Functionally, tyrosine-protein kinase that plays an essential role as cell surface receptor for neuregulins. Binds to neuregulin-1 (NRG1) and is activated by it; ligand-binding increases phosphorylation on tyrosine residues and promotes its association with the p85 subunit of phosphatidylinositol 3-kinase. May also be activated by CSPG5. Involved in the regulation of myeloid cell differentiation. The protein is Receptor tyrosine-protein kinase erbB-3 (Erbb3) of Rattus norvegicus (Rat).